Reading from the N-terminus, the 76-residue chain is Exodeoxyribonuclease 7 small subunit (76 aa).

Belongs to the XseB family. In terms of assembly, heterooligomer composed of large and small subunits.

The protein resides in the cytoplasm. It carries out the reaction Exonucleolytic cleavage in either 5'- to 3'- or 3'- to 5'-direction to yield nucleoside 5'-phosphates.. Bidirectionally degrades single-stranded DNA into large acid-insoluble oligonucleotides, which are then degraded further into small acid-soluble oligonucleotides. The protein is Exodeoxyribonuclease 7 small subunit of Bacillus mycoides (strain KBAB4) (Bacillus weihenstephanensis).